The following is a 194-amino-acid chain: CASP-like protein 2C1 (194 aa).

At 1–18 (MSSYMEAAAAARAAEAKT) the chain is on the cytoplasmic side. A helical membrane pass occupies residues 19–39 (EGLLRGACALLAAAAALLVGL). The Extracellular portion of the chain corresponds to 40–59 (NTQTETVLFIRKKATVKDVQ). The helical transmembrane segment at 60-80 (ALWVLAMAAAAAAGYHLLQLL) threads the bilayer. The Cytoplasmic portion of the chain corresponds to 81–109 (RCFYLSRFADGKPCRHRRAIAWLCFLLDK). The helical transmembrane segment at 110–130 (GCAYITFATTVAAAQACVVAL) threads the bilayer. Residues 131–151 (YGTHALQWTKLCNIYTRFCEQ) are Extracellular-facing. A helical membrane pass occupies residues 152-172 (VAGSLVCAMLAAVGTALLSVV). Over 173–194 (SARNLFRLYPSMLSPPPSSFVG) the chain is Cytoplasmic.

This sequence belongs to the Casparian strip membrane proteins (CASP) family. As to quaternary structure, homodimer and heterodimers.

The protein resides in the cell membrane. In Oryza sativa subsp. japonica (Rice), this protein is CASP-like protein 2C1.